Here is a 157-residue protein sequence, read N- to C-terminus: Ribosome maturation factor RimP (157 aa).

Belongs to the RimP family.

It is found in the cytoplasm. Functionally, required for maturation of 30S ribosomal subunits. The polypeptide is Ribosome maturation factor RimP (Enterococcus faecalis (strain ATCC 700802 / V583)).